Reading from the N-terminus, the 3258-residue chain is MVKRKSSEGQEQDGGRGIPLPIQTFLWRQTSAFLRPKLGKQYEASCVSFERVLVENKLHGLSPALSEAIQSISRWELVQAALPHVLHCTATLLSNRNKLGHQDKLGVAETKLLHTLHWMLLEAPQDCNNERFGGTDRGSSWGGSSSAFIHQVENQGSPGQPCQSSSNDEEENNRRKIFQNSMATVELFVFLFAPLVHRIKESDLTFRLASGLVIWQPMWEHRQPGVSGFTALVKPIRNIITAKRSSPINSQSRTCESPNQDARHLEGLQVVCETFQSDSISPKATISGCHRGNSFDGSLSSQTSQERGPSHSRASLVIPPCQRSRYATYFDVAVLRCLLQPHWSEEGTQWSLMYYLQRLRHMLEEKPEKPPEPDIPLLPRPRSSSMVAAAPSLVNTHKTQDLTMKCNEEEKSLSSEAFSKVSLTNLRRSAVPDLSSDLGMNIFKKFKSRKEDRERKGSIPFHHTGKRRPRRMGVPFLLHEDHLDVSPTRSTFSFGSFSGLGEDRRGIEKGGWQTTILGKLTRRGSSDAATEMESLSARHSHSHHTLVSDLPDPSNSHGENTVKEVRSQISTITVATFNTTLASFNVGYADFFNEHMRKLCNQVPIPEMPHEPLACANLPRSLTDSCINYSYLEDTEHIDGTNNFVHKNGMLDLSVVLKAVYLVLNHDISSRICDVALNIVECLLQLGVVPCVEKNRKKSENKENETLEKRPSEGAFQFKGVSGSSTCGFGGPAVSGAGDGGGEEGGGGDGGGGGGDGGGGGGGGGGPYEKNDKNQEKDESTPVSNHRLALTMLIKIVKSLGCAYGCGEGHRGLSGDRLRHQVFRENAQNCLTKLYKLDKMQFRQTMRDYVNKDSLNNVVDFLHALLGFCMEPVTDNKAGFGNNFTTVDNKSTAQNVEGIIVSAMFKSLITRCASTTHELHSPENLGLYCDIRQLVQFIKEAHGNVFRRVALSALLDSAEKLAPGKKVEENEQESKPAGSKRSEAGSIVDKGQVSSAPEECRSFMSGRPSQTPEHDEQMQGANLGRKDFWRKMFKSQSAASDTSSQSEQDTSECTTAHSGTTSDRRARSRSRRISLRKKLKLPIGKRNWLKRSSLSGLADGVEDLLDISSVDRLSFIRQSSKVKFTSAVKLSEGGPGSGMENGRDEEENFFKRLGCHSFDDHLSPNQDGGKSKNVVNLGAIRQGMKRFQFLLNCCEPGTIPDASILAAALDLEAPVVARAALFLECARFVHRCNRGNWPEWMKGHHVNITKKGLSRGRSPIVGNKRNQKLQWNAAKLFYQWGDAIGVRLNELCHGESESPANLLGLIYDEETKRRLRKEDEEEDFLDDSTVNPSKCGCPFALKMAACQLLLEITTFLRETFSCLPRPRTEPLVDLESCRLRLDPELDRHRYERKISFAGVLDENEDSKDSLHSSSHTLKSDAGVEEKKEGSPWSASEPSIEPEGMSNAGAEENYHRNMSWLHVMILLCNQQSFICTHVDYCHPHCYLHHSRSCARLVRAIKLLYGDSVDSLRESSNISSVALRGKKQKECSDKSCLRTPSLKKRVSDANLEGKKDSGMLKYIRLQVMSLSPAPLSLLIKAAPILTEEMYGDIQPAAWELLLSMDEHMAGAAAAMFLLCAVKVPEAVSDMLMSEFHHPETVQRLNAVLKFHTLWRFRYQVWPRMEEGAQQIFKIPPPSINFTLPSPVLGMPSVPMFDPPWVPQCSGSVQDPINEDQSKSFSARAVSRSHQRAEHILKNLQQEEEKKRLGREASLITAIPITQEACYEPTCTPNSEPEEEVEEVTNLASRRLSVSPSCTSSTSHRNYSFRRGSVWSVRSAVSAEDEEHTTEHTPNHHVPQPPQAVFPACICAAVLPIVHLMEDGEVREDGVAVSAVAQQVLWNCLIEDPSTVLRHFLEKLTISNRQDELMYMLRKLLLNIGDFPAQTSHILFNYLVGLIMYFVRTPCEWGMDAISATLTFLWEVVGYVEGLFFKDLKQTMKKEQCEVKLLVTASMPGTKTLVVHGQNECDIPTQLPVHEDTQFEALLKECLEFFNIPESQSTHYFLMDKRWNLIHYNKTYVRDIYPFRRSVSPQLNLVHMHPEKGQELIQKQVFTRKLEEVGRVLFLISLTQKIPTAHKQSHVSMLQEDLLRLPSFPRSAIDAEFSLFSDPQAGKELFGLDTLQKSLWIQLLEEMFLGMPSEFPWGDEIMLFLNVFNGALILHPEDSALLRQYAATVINTAVHFNHLFSLSGYQWILPTMLQVYSDYESNPQLRQAIEFACHQFYILHRKPFVLQLFASVAPLLEFPDAANNGPSKGVSAQCLFDLLQSLEGETTDILDILELVKAEKPLKSLDFCYGNEDLTFSISEAIKLCVTVVAYAPESFRSLQMLMVLEALVPCYLQKLKRQTSQVETVPAAREEIAATAALATSLQALLYSVEVLTRPMTAPQMSRCDQGHKGTTTANHTMSSGVNTRYQEQGAKLHFIRENLHLLEEGQGIPREELDERIAREEFRRPRESLLNICTEFYKHCGPRLKILQNLAGEPRVIALELLDVKSHMRLAEIAHSLLKLAPYDTQTMESRGLRRYIMEMLPITDWTAEAVRPALILILKRLDRMFNKIHKMPTLRRQVEWEPASNLIEGVCLTLQRQPIISFLPHLRSLINVCVNLVMGVVGPSSVADGLPLLHLSPYLSPPLPFSTAVVRLVALQIQALKEDFPLSHVISPFTNQERREGMLLNLLIPFVLTVGSGSKDSPWLEQPEVQLLLQTVINVLLPPRIISTSRSKNFMLESSPAHCSTPGDAGKDLRREGLAESTSQAAYLALKVILVCFERQLGSQWYWLSLQVKEMALRKVGGLALWDFLDFIVRTRIPIFVLLRPFIQCKLLAQPAENHEELSARQHIADQLERRFIPRPLCKSSLIAEFNSELKILKEAVHSGSAYQGKTSISTVGTSTSAYRLSLATMSRSNTGTGTVWEQDSEPSQQASQDTLSRTDEEDEENDSISMPSVVSEQEAYLLSAIGRRRFSSHVSSMSVPQAEVGMLPSQSEPNVLDDSQGLAAEGSLSRVASIQSEPGQQNLLVQQPLGRKRGLRQLRRPLLSRQKTQTEPRNRQGARLSTTRRSIQPKTKPSADQKRSVTFIEAQPEPAAAPTDALPATGQLQGCSPAPSRKPEAMDEPVLTSSPAIVVADLHSVSPKQSENFPTEEGEKEEDTEAQGATAHSPLSAQLSDPDDFTGLETSSLLQHGDTVLHISEENGMENPLLSSQFTFTPTELGKTDAVLDESHV.

Residues 152-173 (VENQGSPGQPCQSSSNDEEENN) are disordered. A compositionally biased stretch (low complexity) spans 155–166 (QGSPGQPCQSSS). Residue S257 is modified to Phosphoserine. Disordered stretches follow at residues 291-316 (RGNSFDGSLSSQTSQERGPSHSRASL), 449-468 (RKEDRERKGSIPFHHTGKRR), 522-560 (RRGSSDAATEMESLSARHSHSHHTLVSDLPDPSNSHGEN), 697-717 (KKSENKENETLEKRPSEGAFQ), 732-784 (PAVS…TPVS), 963-1019 (PGKK…EQMQ), 1034-1076 (KSQS…ISLR), 1404-1447 (EDSK…MSNA), and 1817-1836 (AVSAEDEEHTTEHTPNHHVP). The segment covering 295–307 (FDGSLSSQTSQER) has biased composition (polar residues). Phosphoserine is present on S525. A compositionally biased stretch (basic and acidic residues) spans 698 to 712 (KSENKENETLEKRPS). The segment covering 732–767 (PAVSGAGDGGGEEGGGGDGGGGGGDGGGGGGGGGGP) has biased composition (gly residues). Composition is skewed to basic and acidic residues over residues 769 to 780 (EKNDKNQEKDES) and 965 to 974 (KKVEENEQES). A compositionally biased stretch (low complexity) spans 1035-1052 (SQSAASDTSSQSEQDTSE). Residues 1066–1076 (ARSRSRRISLR) show a composition bias toward basic residues. Residues 1417–1429 (LKSDAGVEEKKEG) show a composition bias toward basic and acidic residues. Helical transmembrane passes span 2268 to 2288 (PFVLQLFASVAPLLEFPDAAN), 2398 to 2418 (IAATAALATSLQALLYSVEVL), 2785 to 2805 (GLAESTSQAAYLALKVILVCF), and 2831 to 2851 (LALWDFLDFIVRTRIPIFVLL). Residues 2942–2964 (NTGTGTVWEQDSEPSQQASQDTL) are compositionally biased toward polar residues. Residues 2942–2982 (NTGTGTVWEQDSEPSQQASQDTLSRTDEEDEENDSISMPSV) form a disordered region. S3042 carries the phosphoserine modification. Residues 3051–3213 (NLLVQQPLGR…DDFTGLETSS (163 aa)) form a disordered region. A compositionally biased stretch (basic residues) spans 3059–3068 (GRKRGLRQLR). Residues 3088-3100 (RLSTTRRSIQPKT) show a composition bias toward polar residues. A compositionally biased stretch (low complexity) spans 3117 to 3129 (PEPAAAPTDALPA). Positions 3175–3186 (PTEEGEKEEDTE) are enriched in acidic residues.

The protein belongs to the unc-80 family. In terms of assembly, NALCN complex consists of NALCN and auxiliary subunits, UNC79, UNC80 and NACL1. These auxiliary subunits are essential for the NALCN complex function. Interacts (via N-terminus half) with NALCN; this interaction facilitates NALCN surface localization. Interacts with UNC79. UNC80 bridges NALCN to UNC79. Phosphorylated on tyrosine residues. Moderately expressed in fetal brain, spinal cord, skeletal muscle, thymus, spleen, fetal liver, small intestine, colon, kidney and uterus. Highly expressed in adrenal gland, prostate and testis, as well as in brain and cerebellum.

It localises to the cell membrane. Auxiliary subunit of the NALCN sodium channel complex, a voltage-gated ion channel responsible for the resting Na(+) permeability that controls neuronal excitability. Activated by neuropeptides substance P, neurotensin, and extracellular Ca(2+) that regulates neuronal excitability by controlling the sizes of NALCN-dependent sodium-leak current. UNC80 is essential for NALCN sensitivity to extracellular Ca(2+). In Homo sapiens (Human), this protein is Protein unc-80 homolog.